A 516-amino-acid polypeptide reads, in one-letter code: MIPVSLVVVVVGGWTAVYLTDLVLKSSVYFKHSYEDWLENNGLSISPFHIRWQTAVFNRAFYSWGRRKARMLYQWFNFGMVFGVIAMFSSFFLLGKTLIQTLGQMMADSSYSSSSSSSSHSSSSSSSSSSSSSLYNEQVLQVVVPGINLPVNQLTYFFAAVLISGVVHEIGHGIAAIREQVRFNGFGIFLFIIYPGAFVDLFTTHLQLISPVQQLRIFCAGIWHNFILALLGILALILLPVILLPFYYTGVGVLITEVAEDSPAIGPRGLFVGDLVTHLQDCPVTNVQDWNECLDTITYEPQIGYCISASTLQQLSFPVRAYKRLDGSTECCNNHSLTDVCFSYRNNFNKRLHTCLPARKAVEATQVCRTNKDCKKSSSSSFCIIPSLETHTRLIKVKHPPQIDMLYVGHPLHLHYTVSITSFIPRFKFLSIDLPVVVETFVKYLISLSGALAIVNAVPCFALDGQWILNSFLDATLTSVIGDNDVKDLIGFFILLGGSILLAANVALGLWMVTAR.

Residues 1 to 3 are Cytoplasmic-facing; the sequence is MIP. A helical transmembrane segment spans residues 4–24; it reads VSLVVVVVGGWTAVYLTDLVL. At 25 to 74 the chain is on the lumenal side; it reads KSSVYFKHSYEDWLENNGLSISPFHIRWQTAVFNRAFYSWGRRKARMLYQ. The next 2 helical transmembrane spans lie at 75–95 and 96–107; these read WFNF…FLLG and KTLIQTLGQMMA. The Lumenal portion of the chain corresponds to 108 to 141; that stretch reads DSSYSSSSSSSSHSSSSSSSSSSSSSLYNEQVLQ. A helical membrane pass occupies residues 142–166; sequence VVVPGINLPVNQLTYFFAAVLISGV. Residue histidine 168 participates in Zn(2+) binding. Glutamate 169 is a catalytic residue. The next 3 membrane-spanning stretches (helical) occupy residues 171–183, 184–206, and 226–248; these read GHGI…QVRF, NGFG…TTHL, and FILA…PFYY. Histidine 172 provides a ligand contact to Zn(2+). Residues 249 to 443 are Lumenal-facing; the sequence is TGVGVLITEV…LPVVVETFVK (195 aa). N-linked (GlcNAc...) asparagine glycosylation is present at asparagine 334. 2 helical membrane-spanning segments follow: residues 444 to 461 and 462 to 473; these read YLIS…VPCF and ALDGQWILNSFL. The Lumenal portion of the chain corresponds to 474-489; sequence DATLTSVIGDNDVKDL. The chain crosses the membrane as a helical span at residues 490-510; the sequence is IGFFILLGGSILLAANVALGL. Residues 511–516 are Cytoplasmic-facing; that stretch reads WMVTAR.

The protein belongs to the peptidase M50A family. Zn(2+) is required as a cofactor.

It is found in the membrane. The protein localises to the cytoplasm. The protein resides in the golgi apparatus membrane. It carries out the reaction Cleaves several transcription factors that are type-2 transmembrane proteins within membrane-spanning domains. Known substrates include sterol regulatory element-binding protein (SREBP) -1, SREBP-2 and forms of the transcriptional activator ATF6. SREBP-2 is cleaved at the site 477-DRSRILL-|-CVLTFLCLSFNPLTSLLQWGGA-505. The residues Asn-Pro, 11 residues distal to the site of cleavage in the membrane-spanning domain, are important for cleavage by S2P endopeptidase. Replacement of either of these residues does not prevent cleavage, but there is no cleavage if both of these residues are replaced.. Zinc metalloprotease that mediates intramembrane proteolysis of proteins such as ATF6, ATF6B, SREBF1/SREBP1 and SREBF2/SREBP2. Catalyzes the second step in the proteolytic activation of the sterol regulatory element-binding proteins (SREBPs) SREBF1/SREBP1 and SREBF2/SREBP2: cleaves SREBPs within the first transmembrane segment, thereby releasing the N-terminal segment with a portion of the transmembrane segment attached. Mature N-terminal SREBP fragments shuttle to the nucleus and activate gene transcription. Also mediates the second step in the proteolytic activation of the cyclic AMP-dependent transcription factor ATF-6 (ATF6 and ATF6B). Involved in intramembrane proteolysis during bone formation. In astrocytes and osteoblasts, upon DNA damage and ER stress, mediates the second step of the regulated intramembrane proteolytic activation of the transcription factor CREB3L1, leading to the inhibition of cell-cycle progression. This Bos taurus (Bovine) protein is Membrane-bound transcription factor site-2 protease.